Consider the following 1058-residue polypeptide: Carbamoyl phosphate synthase large chain (1058 aa).

The carboxyphosphate synthetic domain stretch occupies residues 1-401 (MPKRTDIQKI…SLLKACRSLE (401 aa)). The ATP site is built by Arg-129, Arg-169, Gly-175, Gly-176, Arg-208, Ile-210, Glu-215, Gly-241, Ile-242, His-243, Gln-284, and Glu-298. Positions 133 to 327 (KQLMEELEQP…IAKLAAKIAV (195 aa)) constitute an ATP-grasp 1 domain. Mg(2+)-binding residues include Gln-284, Glu-298, and Asn-300. Residues Gln-284, Glu-298, and Asn-300 each contribute to the Mn(2+) site. Positions 402–546 (IGVHHNEIPE…YSTYGWENES (145 aa)) are oligomerization domain. Positions 547 to 929 (IRSDKESVLV…ALYKAFEASY (383 aa)) are carbamoyl phosphate synthetic domain. An ATP-grasp 2 domain is found at 671 to 861 (EQALKELDIP…MAQVATKLIL (191 aa)). Arg-707, Ser-746, Ile-748, Glu-752, Gly-777, Val-778, His-779, Ser-780, Gln-820, and Glu-832 together coordinate ATP. Positions 820, 832, and 834 each coordinate Mg(2+). 3 residues coordinate Mn(2+): Gln-820, Glu-832, and Asn-834. The MGS-like domain occupies 930–1058 (LHLPTFGNVV…ESRSFVTEAI (129 aa)). The tract at residues 930 to 1058 (LHLPTFGNVV…ESRSFVTEAI (129 aa)) is allosteric domain.

The protein belongs to the CarB family. In terms of assembly, composed of two chains; the small (or glutamine) chain promotes the hydrolysis of glutamine to ammonia, which is used by the large (or ammonia) chain to synthesize carbamoyl phosphate. Tetramer of heterodimers (alpha,beta)4. It depends on Mg(2+) as a cofactor. The cofactor is Mn(2+).

It carries out the reaction hydrogencarbonate + L-glutamine + 2 ATP + H2O = carbamoyl phosphate + L-glutamate + 2 ADP + phosphate + 2 H(+). The enzyme catalyses hydrogencarbonate + NH4(+) + 2 ATP = carbamoyl phosphate + 2 ADP + phosphate + 2 H(+). The protein operates within amino-acid biosynthesis; L-arginine biosynthesis; carbamoyl phosphate from bicarbonate: step 1/1. Its pathway is pyrimidine metabolism; UMP biosynthesis via de novo pathway; (S)-dihydroorotate from bicarbonate: step 1/3. Large subunit of the glutamine-dependent carbamoyl phosphate synthetase (CPSase). CPSase catalyzes the formation of carbamoyl phosphate from the ammonia moiety of glutamine, carbonate, and phosphate donated by ATP, constituting the first step of 2 biosynthetic pathways, one leading to arginine and/or urea and the other to pyrimidine nucleotides. The large subunit (synthetase) binds the substrates ammonia (free or transferred from glutamine from the small subunit), hydrogencarbonate and ATP and carries out an ATP-coupled ligase reaction, activating hydrogencarbonate by forming carboxy phosphate which reacts with ammonia to form carbamoyl phosphate. The protein is Carbamoyl phosphate synthase large chain of Streptococcus pneumoniae serotype 19F (strain G54).